Consider the following 238-residue polypeptide: Ubiquinone biosynthesis O-methyltransferase (238 aa).

Arg-36, Gly-56, Asp-77, and Met-125 together coordinate S-adenosyl-L-methionine.

This sequence belongs to the methyltransferase superfamily. UbiG/COQ3 family.

The enzyme catalyses a 3-demethylubiquinol + S-adenosyl-L-methionine = a ubiquinol + S-adenosyl-L-homocysteine + H(+). The catalysed reaction is a 3-(all-trans-polyprenyl)benzene-1,2-diol + S-adenosyl-L-methionine = a 2-methoxy-6-(all-trans-polyprenyl)phenol + S-adenosyl-L-homocysteine + H(+). It participates in cofactor biosynthesis; ubiquinone biosynthesis. Functionally, O-methyltransferase that catalyzes the 2 O-methylation steps in the ubiquinone biosynthetic pathway. The chain is Ubiquinone biosynthesis O-methyltransferase from Histophilus somni (strain 2336) (Haemophilus somnus).